A 128-amino-acid chain; its full sequence is Adrenodoxin (128 aa).

S3 carries the phosphoserine modification. At K6 the chain carries N6-acetyllysine; alternate. K6 carries the post-translational modification N6-succinyllysine; alternate. The 2Fe-2S ferredoxin-type domain maps to 7 to 111 (VTVNFINRDG…NMTVRVPDAV (105 aa)). The [2Fe-2S] cluster site is built by C46, C52, C55, and C92. K98 carries the N6-succinyllysine modification. S117 carries the post-translational modification Phosphoserine.

It belongs to the adrenodoxin/putidaredoxin family. In terms of assembly, interacts with CYP11A1. Requires [2Fe-2S] cluster as cofactor.

The protein resides in the mitochondrion matrix. Functionally, essential for the synthesis of various steroid hormones. Participates in the reduction of mitochondrial cytochrome P450 for steroidogenesis. Transfers electrons from adrenodoxin reductase to CYP11A1, a cytochrome P450 that catalyzes cholesterol side-chain cleavage. Does not form a ternary complex with adrenodoxin reductase and CYP11A1 but shuttles between the two enzymes to transfer electrons. In Ovis aries (Sheep), this protein is Adrenodoxin (FDX1).